The sequence spans 29 residues: TRCKGKGAPCRKTMYDCCSGSCGRRGKCG.

Residues 1-2 (TR) constitute a propeptide that is removed on maturation. Disulfide bonds link Cys-3-Cys-18, Cys-10-Cys-22, and Cys-17-Cys-28. Cys-28 carries the cysteine amide modification.

Belongs to the conotoxin O1 superfamily. Post-translationally, not hydroxylated; hydroxylation, on a synthetic hydroxylated MVIIC, has a significant impact on the oxidative folding but not on the biological activity. As to expression, expressed by the venom duct.

The protein resides in the secreted. In terms of biological role, omega-conotoxins act at presynaptic membranes, they bind and block voltage-gated calcium channels (Cav). This toxin preferentially blocks P/Q-type calcium channels (Cav2.1/CACNA1A) (IC(50)=0.60 nM). Also shows an inhibition on Cav2.2/CACNA1A channels (IC(50)=7.0 nM). In Conus magus (Magical cone), this protein is Omega-conotoxin MVIIC.